The following is a 268-amino-acid chain: Tryptophan synthase alpha chain (268 aa).

Catalysis depends on proton acceptor residues glutamate 49 and aspartate 60.

This sequence belongs to the TrpA family. As to quaternary structure, tetramer of two alpha and two beta chains.

The catalysed reaction is (1S,2R)-1-C-(indol-3-yl)glycerol 3-phosphate + L-serine = D-glyceraldehyde 3-phosphate + L-tryptophan + H2O. The protein operates within amino-acid biosynthesis; L-tryptophan biosynthesis; L-tryptophan from chorismate: step 5/5. The alpha subunit is responsible for the aldol cleavage of indoleglycerol phosphate to indole and glyceraldehyde 3-phosphate. The chain is Tryptophan synthase alpha chain from Haemophilus influenzae (strain PittGG).